Reading from the N-terminus, the 349-residue chain is MSLGPVILDIEGTQLTANDKKKLRHPLVGGVILFTRNYSSLAQLMHLTAEIHALRTPPLLVAVDHEGGRVQRFREDFTRLPPMRELGRIWDEHPAQARHLAHEAGYVLAAELRAAGVDFSFTPVLDMDYGQSSVIRDRAFHRDPQAIAELAHSLMSGLKSAGMAAVGKHFPGHGYIEADSHFEMPVDERTYAQIEMDDLIPFRKMIGFGLTGMMPAHVIYPKVDALPAGFSEVWLKKVLRGELGFEGCIFSDDLNMAGAAFAGNPVERAQKALHAGCDMVLLCNNPEAAEMLLAELHWDLPALGVIRLARMRGRPNPDSLVKLHENPNFVSAVEKIAGIGVRSGELPLV.

Residues Asp64, Arg72, Arg138, and 168–169 (KH) each bind substrate. His181 acts as the Proton donor/acceptor in catalysis. Catalysis depends on Asp252, which acts as the Nucleophile.

It belongs to the glycosyl hydrolase 3 family. NagZ subfamily.

It is found in the cytoplasm. It catalyses the reaction Hydrolysis of terminal non-reducing N-acetyl-D-hexosamine residues in N-acetyl-beta-D-hexosaminides.. It participates in cell wall biogenesis; peptidoglycan recycling. Functionally, plays a role in peptidoglycan recycling by cleaving the terminal beta-1,4-linked N-acetylglucosamine (GlcNAc) from peptide-linked peptidoglycan fragments, giving rise to free GlcNAc, anhydro-N-acetylmuramic acid and anhydro-N-acetylmuramic acid-linked peptides. The protein is Beta-hexosaminidase of Nitrosospira multiformis (strain ATCC 25196 / NCIMB 11849 / C 71).